A 772-amino-acid polypeptide reads, in one-letter code: Ion-translocating oxidoreductase complex subunit C (772 aa).

2 4Fe-4S ferredoxin-type domains span residues glycine 369–tyrosine 397 and lysine 407–phenylalanine 436. Positions 377, 380, 383, 387, 416, 419, 422, and 426 each coordinate [4Fe-4S] cluster. 3 disordered regions span residues lysine 602–lysine 684, alanine 696–alanine 717, and lysine 727–proline 746. The segment covering glutamine 605–glutamine 615 has biased composition (low complexity).

This sequence belongs to the 4Fe4S bacterial-type ferredoxin family. RnfC subfamily. As to quaternary structure, the complex is composed of six subunits: RsxA, RsxB, RsxC, RsxD, RsxE and RsxG. The cofactor is [4Fe-4S] cluster.

The protein resides in the cell inner membrane. Part of a membrane-bound complex that couples electron transfer with translocation of ions across the membrane. Required to maintain the reduced state of SoxR. This chain is Ion-translocating oxidoreductase complex subunit C, found in Escherichia coli O157:H7 (strain EC4115 / EHEC).